A 501-amino-acid polypeptide reads, in one-letter code: CUGBP Elav-like family member 1 (501 aa).

Residues 2–196 (NGSLDHPDQP…DTQKDKEQKR (195 aa)) are binds strongly to URE. 2 RRM domains span residues 16–99 (IKMF…PADS) and 108–188 (RKLF…FADT). 2 stretches are compositionally biased toward low complexity: residues 274-298 (PTGSSALTTSSSPLSVLTSSGTPSG) and 312-323 (SSPTSSTSSSVN). The interval 274 to 323 (PTGSSALTTSSSPLSVLTSSGTPSGQPAQSAWDAYKAGSSPTSSTSSSVN) is disordered. The interval 397-501 (LLSQQNVSAA…KRSKNDSKPY (105 aa)) is binds strongly to URE. Residues 416–494 (ANLFIYHLPQ…KRLKVQLKRS (79 aa)) form the RRM 3 domain.

It belongs to the CELF/BRUNOL family.

It localises to the nucleus. Its subcellular location is the cytoplasm. In terms of biological role, RNA-binding protein implicated in the regulation of several post-transcriptional events. May be involved in mRNA translation activation and stability. Involved in the regulation of muscle-specific splicing of alpha actinin pre-mRNAs via the binding to the UR-repeat element (URE) at the branch point of the non-muscle (NM) exon. The protein is CUGBP Elav-like family member 1 (celf1) of Danio rerio (Zebrafish).